Reading from the N-terminus, the 58-residue chain is UPF0391 membrane protein Plav_0056 (58 aa).

The next 2 membrane-spanning stretches (helical) occupy residues 4-24 (WAAVFFIIAVIAAVLGFGGLV) and 30-50 (IAQILFFIFLVLFVVSLIFGV).

The protein belongs to the UPF0391 family.

The protein localises to the cell membrane. This Parvibaculum lavamentivorans (strain DS-1 / DSM 13023 / NCIMB 13966) protein is UPF0391 membrane protein Plav_0056.